The following is a 248-amino-acid chain: Probable transcriptional regulatory protein PSPA7_4544 (248 aa).

Belongs to the TACO1 family.

It is found in the cytoplasm. This chain is Probable transcriptional regulatory protein PSPA7_4544, found in Pseudomonas paraeruginosa (strain DSM 24068 / PA7) (Pseudomonas aeruginosa (strain PA7)).